The primary structure comprises 753 residues: 5-methyltetrahydropteroyltriglutamate--homocysteine methyltransferase (753 aa).

Residues 17–20 (RELK) and K117 each bind 5-methyltetrahydropteroyltri-L-glutamate. Residues 431–433 (IGS) and E484 each bind L-homocysteine. Residues 431–433 (IGS) and E484 contribute to the L-methionine site. Residues 515 to 516 (RC) and W561 contribute to the 5-methyltetrahydropteroyltri-L-glutamate site. Residue D599 participates in L-homocysteine binding. D599 is an L-methionine binding site. Position 605 (E605) interacts with 5-methyltetrahydropteroyltri-L-glutamate. The Zn(2+) site is built by H641, C643, and E665. H694 serves as the catalytic Proton donor. Residue C726 coordinates Zn(2+).

The protein belongs to the vitamin-B12 independent methionine synthase family. Zn(2+) is required as a cofactor.

The enzyme catalyses 5-methyltetrahydropteroyltri-L-glutamate + L-homocysteine = tetrahydropteroyltri-L-glutamate + L-methionine. The protein operates within amino-acid biosynthesis; L-methionine biosynthesis via de novo pathway; L-methionine from L-homocysteine (MetE route): step 1/1. Functionally, catalyzes the transfer of a methyl group from 5-methyltetrahydrofolate to homocysteine resulting in methionine formation. The polypeptide is 5-methyltetrahydropteroyltriglutamate--homocysteine methyltransferase (Escherichia fergusonii (strain ATCC 35469 / DSM 13698 / CCUG 18766 / IAM 14443 / JCM 21226 / LMG 7866 / NBRC 102419 / NCTC 12128 / CDC 0568-73)).